The following is a 209-amino-acid chain: Ribonuclease HII (209 aa).

The region spanning D20–I209 is the RNase H type-2 domain. A divalent metal cation is bound by residues D26, E27, and D122.

This sequence belongs to the RNase HII family. It depends on Mn(2+) as a cofactor. Requires Mg(2+) as cofactor.

It is found in the cytoplasm. It carries out the reaction Endonucleolytic cleavage to 5'-phosphomonoester.. Functionally, endonuclease that specifically degrades the RNA of RNA-DNA hybrids. The polypeptide is Ribonuclease HII (Prochlorococcus marinus subsp. pastoris (strain CCMP1986 / NIES-2087 / MED4)).